Reading from the N-terminus, the 156-residue chain is Ribosome maturation factor RimP (156 aa).

This sequence belongs to the RimP family.

The protein resides in the cytoplasm. Functionally, required for maturation of 30S ribosomal subunits. The sequence is that of Ribosome maturation factor RimP from Bacillus velezensis (strain DSM 23117 / BGSC 10A6 / LMG 26770 / FZB42) (Bacillus amyloliquefaciens subsp. plantarum).